The sequence spans 358 residues: 2-oxoisovalerate dehydrogenase subunit beta 2, mitochondrial (358 aa).

A mitochondrion-targeting transit peptide spans Met1–Pro16. Residue Tyr119 participates in thiamine diphosphate binding. K(+) contacts are provided by Gly145, Leu147, Thr148, Asp198, and Asn200.

In terms of assembly, heterotetramer of alpha and beta chains. Thiamine diphosphate is required as a cofactor. Expressed in the non-photosynthetic organs such as siliques, flowers and roots.

The protein resides in the mitochondrion matrix. It carries out the reaction N(6)-[(R)-lipoyl]-L-lysyl-[protein] + 3-methyl-2-oxobutanoate + H(+) = N(6)-[(R)-S(8)-2-methylpropanoyldihydrolipoyl]-L-lysyl-[protein] + CO2. Functionally, the branched-chain alpha-keto dehydrogenase complex catalyzes the overall conversion of alpha-keto acids to acyl-CoA and CO(2). It contains multiple copies of three enzymatic components: branched-chain alpha-keto acid decarboxylase (E1), lipoamide acyltransferase (E2) and lipoamide dehydrogenase (E3). Required during sugar starvation and acts under the control of a sugar-sensing mechanism involving Ser/Thr kinases and phosphatases. The protein is 2-oxoisovalerate dehydrogenase subunit beta 2, mitochondrial (DIN4) of Arabidopsis thaliana (Mouse-ear cress).